A 309-amino-acid chain; its full sequence is MPKVRTKDLIEQFQLELISGEEGIHRPIDTSDLSRPGIEMAGFFTYYPADRVQLLGKTELTFFDTLTSDQKQERMKALCTEETPCIIVTRNQDVPDELLQASRESGMPLLRSSQTTTRLSSRLTNYLEGKLAPTTAVHGVLVDIYGVGVLITGQSGVGKSETALELVKRGHRLVADDSVEIRQEDEDMLVGSSPDLIEHLLEIRGLGIINVMTLFGAGAVRNYKRITLVINLEIWDQKKNYDRLGLDEEKMKIIDTELTKITLPVRPGRNLAVIIEVAAMNFRLKRMGVNAAQQFSERLMSAIELGNQE.

Residues His-138 and Lys-159 contribute to the active site. Residue 153–160 (GQSGVGKS) coordinates ATP. Residue Ser-160 coordinates Mg(2+). Catalysis depends on Asp-177, which acts as the Proton acceptor; for phosphorylation activity. Proton donor; for dephosphorylation activity. The interval 201-210 (LEIRGLGIIN) is important for the catalytic mechanism of both phosphorylation and dephosphorylation. Glu-202 lines the Mg(2+) pocket. Residue Arg-243 is part of the active site. An important for the catalytic mechanism of dephosphorylation region spans residues 264-269 (PVRPGR).

The protein belongs to the HPrK/P family. In terms of assembly, homohexamer. Requires Mg(2+) as cofactor.

It carries out the reaction [HPr protein]-L-serine + ATP = [HPr protein]-O-phospho-L-serine + ADP + H(+). It catalyses the reaction [HPr protein]-O-phospho-L-serine + phosphate + H(+) = [HPr protein]-L-serine + diphosphate. Catalyzes the ATP- as well as the pyrophosphate-dependent phosphorylation of a specific serine residue in HPr, a phosphocarrier protein of the phosphoenolpyruvate-dependent sugar phosphotransferase system (PTS). HprK/P also catalyzes the pyrophosphate-producing, inorganic phosphate-dependent dephosphorylation (phosphorolysis) of seryl-phosphorylated HPr (P-Ser-HPr). The two antagonistic activities of HprK/P are regulated by several intracellular metabolites, which change their concentration in response to the absence or presence of rapidly metabolisable carbon sources (glucose, fructose, etc.) in the growth medium. Also phosphorylates/dephosphorylates the HPr-like catabolite repression protein crh on a specific serine residue. Therefore, by controlling the phosphorylation state of HPr and crh, HPrK/P is a sensor enzyme that plays a major role in the regulation of carbon metabolism and sugar transport: it mediates carbon catabolite repression (CCR), and regulates PTS-catalyzed carbohydrate uptake and inducer exclusion. This is HPr kinase/phosphorylase from Bacillus anthracis (strain A0248).